A 453-amino-acid chain; its full sequence is Probable phenylalanine--tRNA ligase, mitochondrial (453 aa).

The N-terminal 27 residues, 1–27 (MLLTLRVQGARHWLKSTRCLASSAAPA), are a transit peptide targeting the mitochondrion. Residues 142–145 (TAHQ), arginine 164, 171–173 (THY), 178–180 (QAD), glutamate 285, and phenylalanine 310 each bind substrate. The FDX-ACB domain maps to 356-453 (SHYPQCTNDL…SVDSFNVQIR (98 aa)).

Belongs to the class-II aminoacyl-tRNA synthetase family.

It is found in the mitochondrion matrix. The enzyme catalyses tRNA(Phe) + L-phenylalanine + ATP = L-phenylalanyl-tRNA(Phe) + AMP + diphosphate + H(+). Functionally, is responsible for the charging of tRNA(Phe) with phenylalanine in mitochondrial translation. This is Probable phenylalanine--tRNA ligase, mitochondrial from Drosophila melanogaster (Fruit fly).